A 434-amino-acid chain; its full sequence is Enolase (434 aa).

(2R)-2-phosphoglycerate is bound at residue glutamine 163. The Proton donor role is filled by glutamate 205. Mg(2+) is bound by residues aspartate 242, glutamate 291, and aspartate 318. Lysine 343, arginine 372, serine 373, and lysine 394 together coordinate (2R)-2-phosphoglycerate. Lysine 343 acts as the Proton acceptor in catalysis.

It belongs to the enolase family. Mg(2+) serves as cofactor.

The protein localises to the cytoplasm. It is found in the secreted. The protein resides in the cell surface. The enzyme catalyses (2R)-2-phosphoglycerate = phosphoenolpyruvate + H2O. The protein operates within carbohydrate degradation; glycolysis; pyruvate from D-glyceraldehyde 3-phosphate: step 4/5. Functionally, catalyzes the reversible conversion of 2-phosphoglycerate (2-PG) into phosphoenolpyruvate (PEP). It is essential for the degradation of carbohydrates via glycolysis. In Streptococcus intermedius, this protein is Enolase.